Reading from the N-terminus, the 393-residue chain is S-adenosylmethionine synthase 2 (393 aa).

Residue Glu-9 participates in Mg(2+) binding. His-15 serves as a coordination point for ATP. Glu-43 is a K(+) binding site. L-methionine contacts are provided by Glu-56 and Gln-99. Residues 167–169 (DGK), 235–238 (SGRF), Asp-246, 252–253 (RK), Ala-269, Lys-273, and Lys-277 contribute to the ATP site. Residue Asp-246 coordinates L-methionine. Lys-277 contacts L-methionine.

This sequence belongs to the AdoMet synthase family. In terms of assembly, homotetramer. Requires Mn(2+) as cofactor. Mg(2+) is required as a cofactor. The cofactor is Co(2+). It depends on K(+) as a cofactor.

It is found in the cytoplasm. It carries out the reaction L-methionine + ATP + H2O = S-adenosyl-L-methionine + phosphate + diphosphate. The protein operates within amino-acid biosynthesis; S-adenosyl-L-methionine biosynthesis; S-adenosyl-L-methionine from L-methionine: step 1/1. In terms of biological role, catalyzes the formation of S-adenosylmethionine from methionine and ATP. The reaction comprises two steps that are both catalyzed by the same enzyme: formation of S-adenosylmethionine (AdoMet) and triphosphate, and subsequent hydrolysis of the triphosphate. The protein is S-adenosylmethionine synthase 2 (METK2) of Vitis vinifera (Grape).